Here is a 264-residue protein sequence, read N- to C-terminus: Thymidylate synthase (264 aa).

Residues Arg-21 and 126 to 127 (RR) each bind dUMP. Catalysis depends on Cys-146, which acts as the Nucleophile. Residues 166–169 (RSAD), Asn-177, and 207–209 (HLY) each bind dUMP. (6R)-5,10-methylene-5,6,7,8-tetrahydrofolate is bound at residue Asp-169. Residue Ala-263 coordinates (6R)-5,10-methylene-5,6,7,8-tetrahydrofolate.

This sequence belongs to the thymidylate synthase family. Bacterial-type ThyA subfamily. In terms of assembly, homodimer.

Its subcellular location is the cytoplasm. It carries out the reaction dUMP + (6R)-5,10-methylene-5,6,7,8-tetrahydrofolate = 7,8-dihydrofolate + dTMP. It participates in pyrimidine metabolism; dTTP biosynthesis. Catalyzes the reductive methylation of 2'-deoxyuridine-5'-monophosphate (dUMP) to 2'-deoxythymidine-5'-monophosphate (dTMP) while utilizing 5,10-methylenetetrahydrofolate (mTHF) as the methyl donor and reductant in the reaction, yielding dihydrofolate (DHF) as a by-product. This enzymatic reaction provides an intracellular de novo source of dTMP, an essential precursor for DNA biosynthesis. The sequence is that of Thymidylate synthase from Bradyrhizobium sp. (strain BTAi1 / ATCC BAA-1182).